Here is a 672-residue protein sequence, read N- to C-terminus: DNA ligase (672 aa).

NAD(+)-binding positions include 32 to 36, 81 to 82, and E113; these read DAEYD and SL. Residue K115 is the N6-AMP-lysine intermediate of the active site. Residues R136, E173, K290, and K314 each coordinate NAD(+). The Zn(2+) site is built by C408, C411, C426, and C432. The BRCT domain maps to 592–672; that stretch reads EIDSPFAGKT…EMIRLLGESS (81 aa).

Belongs to the NAD-dependent DNA ligase family. LigA subfamily. It depends on Mg(2+) as a cofactor. Mn(2+) is required as a cofactor.

It catalyses the reaction NAD(+) + (deoxyribonucleotide)n-3'-hydroxyl + 5'-phospho-(deoxyribonucleotide)m = (deoxyribonucleotide)n+m + AMP + beta-nicotinamide D-nucleotide.. Functionally, DNA ligase that catalyzes the formation of phosphodiester linkages between 5'-phosphoryl and 3'-hydroxyl groups in double-stranded DNA using NAD as a coenzyme and as the energy source for the reaction. It is essential for DNA replication and repair of damaged DNA. The chain is DNA ligase from Yersinia enterocolitica serotype O:8 / biotype 1B (strain NCTC 13174 / 8081).